Reading from the N-terminus, the 330-residue chain is Phenylalanine--tRNA ligase alpha subunit (330 aa).

A Mg(2+)-binding site is contributed by E255.

The protein belongs to the class-II aminoacyl-tRNA synthetase family. Phe-tRNA synthetase alpha subunit type 1 subfamily. Tetramer of two alpha and two beta subunits. The cofactor is Mg(2+).

It is found in the cytoplasm. The catalysed reaction is tRNA(Phe) + L-phenylalanine + ATP = L-phenylalanyl-tRNA(Phe) + AMP + diphosphate + H(+). The sequence is that of Phenylalanine--tRNA ligase alpha subunit from Acinetobacter baylyi (strain ATCC 33305 / BD413 / ADP1).